The chain runs to 215 residues: Redox-sensing transcriptional repressor Rex (215 aa).

The segment at residues 18-57 (LYYRFLKNLHASGKQRVSSAELSEAVKVDPATIRRDFSYF) is a DNA-binding region (H-T-H motif). An NAD(+)-binding site is contributed by 92–97 (GVGNLG).

The protein belongs to the transcriptional regulatory Rex family. In terms of assembly, homodimer.

Its subcellular location is the cytoplasm. Modulates transcription in response to changes in cellular NADH/NAD(+) redox state. The polypeptide is Redox-sensing transcriptional repressor Rex (Geobacillus sp. (strain WCH70)).